Here is a 267-residue protein sequence, read N- to C-terminus: 2-keto-3-deoxy-L-rhamnonate aldolase (267 aa).

His49 functions as the Proton acceptor in the catalytic mechanism. Residue Gln151 participates in substrate binding. Glu153 contributes to the Mg(2+) binding site. Substrate-binding residues include Ala178 and Asp179. Residue Asp179 coordinates Mg(2+).

The protein belongs to the HpcH/HpaI aldolase family. KDR aldolase subfamily. In terms of assembly, homohexamer. The cofactor is Mg(2+).

The catalysed reaction is 2-dehydro-3-deoxy-L-rhamnonate = (S)-lactaldehyde + pyruvate. Catalyzes the reversible retro-aldol cleavage of 2-keto-3-deoxy-L-rhamnonate (KDR) to pyruvate and lactaldehyde. The polypeptide is 2-keto-3-deoxy-L-rhamnonate aldolase (Shigella dysenteriae serotype 1 (strain Sd197)).